The primary structure comprises 386 residues: WD repeat-containing protein 89 (386 aa).

WD repeat units lie at residues 21–65 (KEPT…LLRE), 68–107 (GSPG…EKPV), 112–156 (GYPS…QDLS), 167–207 (THSD…EEDA), 213–253 (NSVS…TDEP), and 318–357 (GHAA…KTFT).

The polypeptide is WD repeat-containing protein 89 (Wdr89) (Mus musculus (Mouse)).